The chain runs to 242 residues: Tropomyosin-1 (242 aa).

2 disordered regions span residues 1–31 (MDAIKKKMSAMKTKLEEADKQAQDAEDELTA) and 65–96 (TSLTEKYNEEEKKAEEGRRAHKELENRGQTDY). A coiled-coil region spans residues 1–242 (MDAIKKKMSA…DELLLELASM (242 aa)). 2 stretches are compositionally biased toward basic and acidic residues: residues 13-23 (TKLEEADKQAQ) and 70-96 (KYNEEEKKAEEGRRAHKELENRGQTDY).

Belongs to the tropomyosin family. Homodimer. In terms of tissue distribution, expressed ubiquitously.

This Podocoryna carnea (Hydrozoan) protein is Tropomyosin-1 (TPM1).